Consider the following 226-residue polypeptide: ATP synthase F(0) complex subunit a (226 aa).

A run of 6 helical transmembrane segments spans residues 6–26 (FASF…IILF), 68–88 (WSLM…LGLL), 97–117 (QLSM…VMGF), 138–158 (IPML…ALAV), 164–184 (ITAG…LSTI), and 189–209 (ALII…VALI).

It belongs to the ATPase A chain family. As to quaternary structure, component of the ATP synthase complex composed at least of ATP5F1A/subunit alpha, ATP5F1B/subunit beta, ATP5MC1/subunit c (homooctomer), MT-ATP6/subunit a, MT-ATP8/subunit 8, ATP5ME/subunit e, ATP5MF/subunit f, ATP5MG/subunit g, ATP5MK/subunit k, ATP5MJ/subunit j, ATP5F1C/subunit gamma, ATP5F1D/subunit delta, ATP5F1E/subunit epsilon, ATP5PF/subunit F6, ATP5PB/subunit b, ATP5PD/subunit d, ATP5PO/subunit OSCP. ATP synthase complex consists of a soluble F(1) head domain (subunits alpha(3) and beta(3)) - the catalytic core - and a membrane F(0) domain - the membrane proton channel (subunits c, a, 8, e, f, g, k and j). These two domains are linked by a central stalk (subunits gamma, delta, and epsilon) rotating inside the F1 region and a stationary peripheral stalk (subunits F6, b, d, and OSCP). Interacts with DNAJC30; interaction is direct.

It localises to the mitochondrion inner membrane. The catalysed reaction is H(+)(in) = H(+)(out). In terms of biological role, subunit a, of the mitochondrial membrane ATP synthase complex (F(1)F(0) ATP synthase or Complex V) that produces ATP from ADP in the presence of a proton gradient across the membrane which is generated by electron transport complexes of the respiratory chain. ATP synthase complex consist of a soluble F(1) head domain - the catalytic core - and a membrane F(1) domain - the membrane proton channel. These two domains are linked by a central stalk rotating inside the F(1) region and a stationary peripheral stalk. During catalysis, ATP synthesis in the catalytic domain of F(1) is coupled via a rotary mechanism of the central stalk subunits to proton translocation. With the subunit c (ATP5MC1), forms the proton-conducting channel in the F(0) domain, that contains two crucial half-channels (inlet and outlet) that facilitate proton movement from the mitochondrial intermembrane space (IMS) into the matrix. Protons are taken up via the inlet half-channel and released through the outlet half-channel, following a Grotthuss mechanism. In Pan troglodytes (Chimpanzee), this protein is ATP synthase F(0) complex subunit a.